The chain runs to 79 residues: Conotoxin Cal9.2a (79 aa).

A signal peptide spans 1-23; the sequence is MNCYLILTVALLLTSAMTGTTTA. Residues 24–33 constitute a propeptide that is removed on maturation; it reads GQLNKKGVTL. Disulfide bonds link cysteine 41–cysteine 58, cysteine 46–cysteine 68, and cysteine 48–cysteine 73.

As to expression, expressed by the venom duct.

Its subcellular location is the secreted. In terms of biological role, probable neurotoxin with unknown target. Possibly targets ion channels. This Californiconus californicus (California cone) protein is Conotoxin Cal9.2a.